The primary structure comprises 73 residues: Defensin-like protein 34 (73 aa).

A signal peptide spans 1-25 (MASNKVSFFLVLCLCVLSTAEFGEA). 3 disulfides stabilise this stretch: Cys-33–Cys-59, Cys-45–Cys-68, and Cys-49–Cys-70.

It belongs to the DEFL family.

It is found in the secreted. The polypeptide is Defensin-like protein 34 (Arabidopsis thaliana (Mouse-ear cress)).